We begin with the raw amino-acid sequence, 328 residues long: Gonadotropin-releasing hormone receptor (328 aa).

At 1-38 the chain is on the extracellular side; the sequence is MANSASPEQNQNHCSAINNSIPLMQGNLPTLTLSGKIR. N18 carries an N-linked (GlcNAc...) asparagine glycan. Residues 39–58 form a helical membrane-spanning segment; the sequence is VTVTFFLFLLSATFNASFLL. Residues 59-77 are Cytoplasmic-facing; sequence KLQKWTQKKEKGKKLSRMK. Residues 78-97 traverse the membrane as a helical segment; sequence LLLKHLTLANLLETLIVMPL. The Extracellular segment spans residues 98 to 115; it reads DGMWNITVQWYAGELLCK. A glycan (N-linked (GlcNAc...) asparagine) is linked at N102. C114 and C196 are disulfide-bonded. Residues 116-137 traverse the membrane as a helical segment; it reads VLSYLKLFSMYAPAFMMVVISL. Over 138–164 the chain is Cytoplasmic; that stretch reads DRSLAITRPLALKSNSKVGQSMVGLAW. A helical transmembrane segment spans residues 165 to 184; that stretch reads ILSSVFAGPQLYIFRMIHLA. Topologically, residues 185–212 are extracellular; sequence DSSGQTKVFSQCVTHCSFSQWWHQAFYN. A helical membrane pass occupies residues 213-232; the sequence is FFTFSCLFIIPLFIMLICNA. The Cytoplasmic segment spans residues 233 to 281; that stretch reads KIIFTLTRVLHQDPHELQLNQSKNNIPRARLKTLKMTVAFATSFTVCWT. A helical membrane pass occupies residues 282–300; sequence PYYVLGIWYWFDPEMLNRL. Over 301–306 the chain is Extracellular; that stretch reads SDPVNH. A helical transmembrane segment spans residues 307-326; it reads FFFLFAFLNPCFDPLIYGYF. At 327-328 the chain is on the cytoplasmic side; sequence SL.

This sequence belongs to the G-protein coupled receptor 1 family. In terms of tissue distribution, pituitary, ovary, testis, breast and prostate but not in liver and spleen.

The protein localises to the cell membrane. In terms of biological role, receptor for gonadotropin releasing hormone (GnRH) that mediates the action of GnRH to stimulate the secretion of the gonadotropic hormones luteinizing hormone (LH) and follicle-stimulating hormone (FSH). This receptor mediates its action by association with G-proteins that activate a phosphatidylinositol-calcium second messenger system. Isoform 2 may act as an inhibitor of GnRH-R signaling. The protein is Gonadotropin-releasing hormone receptor (GNRHR) of Homo sapiens (Human).